The following is an 85-amino-acid chain: HPr-like protein Crh (85 aa).

The HPr domain maps to 1–85 (MVQQKVEVRL…KLAAYVQEEV (85 aa)). Residue Ser-46 is modified to Phosphoserine; by HPrK/P.

The protein belongs to the HPr family. As to quaternary structure, mixture of monomers and homodimers. Interacts with CcpA as a monomer.

In terms of biological role, along with seryl-phosphorylated HPr, phosphorylated Crh is implicated in carbon catabolite repression (CCR) of levanase, inositol dehydrogenase, and beta-xylosidase. Exerts its effect on CCR by interacting with CcpA. The polypeptide is HPr-like protein Crh (crh) (Bacillus subtilis (strain 168)).